A 131-amino-acid chain; its full sequence is Large ribosomal subunit protein bL12 (131 aa).

Residues 100 to 125 (STPKPIKEGISKEDAEAAKKQLEDAG) show a composition bias toward basic and acidic residues. Positions 100–131 (STPKPIKEGISKEDAEAAKKQLEDAGGKVSIK) are disordered.

Belongs to the bacterial ribosomal protein bL12 family. In terms of assembly, homodimer. Part of the ribosomal stalk of the 50S ribosomal subunit. Forms a multimeric L10(L12)X complex, where L10 forms an elongated spine to which 2 to 4 L12 dimers bind in a sequential fashion. Binds GTP-bound translation factors.

Its function is as follows. Forms part of the ribosomal stalk which helps the ribosome interact with GTP-bound translation factors. Is thus essential for accurate translation. The polypeptide is Large ribosomal subunit protein bL12 (Cyanothece sp. (strain PCC 7425 / ATCC 29141)).